Consider the following 652-residue polypeptide: MTEVSKAAAFDRTQFEELMKKRFFFSPSFQIYGGISGLYDYGPPGSALQSNLVDIWRKHFVIEESMLEVDCSMLTPHEVLKTSGHVDKFADWMCKDPATGEIFRADHLVEEVLEARLKGDKEARGQNSNDQPEESDDKKKRKKKVKEIRATRLDDKTVEEYEFILAQIDNYDGDQLGELMKKYDIRNPATNGELETPRQFNLMFETQIGPSGGLKGYLRPETAQGQFLNFSRLLEFNNGKVPFASAMVGKAFRNEISPRSGLLRVREFLMAEVEHFVDPKNKEHDRFDEVSHMPLRLLPRGVQLEGKTDILEMPIGDAVKKGIVDNTTLGYFMARISLFLEKIGIDMNRVRFRQHMSNEMAHYACDCWDAEIQCSYGWIECVGCADRSAYDLSVHSKATKTPLVVQEALPEPVVVEQFEVEVNRKKFGPRFKRDAKAVEEAMISWPESEKVEKSAQLVAEGKIIVNVNGVEHTVESDLVTIEKRKHTEHIRTYTPNVIEPSFGLGRILYVLMEHAYWTRPEDVNRGVLSFPASIAPIKALIVPLSRNAEFAPFVKKLSAKLRNLGISNKIDDSNANIGRRYARNDELGTPFGLTVDFETLQNETITLRERDSTKQVRGSQDEVIAALVSMVEGKSSFEDALAKFGEFKSTQE.

The disordered stretch occupies residues 119 to 145 (GDKEARGQNSNDQPEESDDKKKRKKKV). Position 221 (Glu-221) interacts with glycine. ATP-binding positions include 253–255 (RNE) and 264–265 (RV). Glu-272 provides a ligand contact to glycine. 380–381 (EC) lines the ATP pocket. A glycine-binding site is contributed by 499–501 (EPS). ATP is bound at residue Arg-506.

It belongs to the class-II aminoacyl-tRNA synthetase family. Homodimer.

Its subcellular location is the cytoplasm. It catalyses the reaction tRNA(Gly) + glycine + ATP = glycyl-tRNA(Gly) + AMP + diphosphate. The enzyme catalyses 2 ATP + H(+) = P(1),P(4)-bis(5'-adenosyl) tetraphosphate + diphosphate. Its function is as follows. Catalyzes the ATP-dependent ligation of glycine to the 3'-end of its cognate tRNA, via the formation of an aminoacyl-adenylate intermediate (Gly-AMP). Also produces diadenosine tetraphosphate (Ap4A), a universal pleiotropic signaling molecule needed for cell regulation pathways, by direct condensation of 2 ATPs. Thereby, may play a special role in Ap4A homeostasis. This is Putative glycine--tRNA ligase (grs1) from Schizosaccharomyces pombe (strain 972 / ATCC 24843) (Fission yeast).